The chain runs to 166 residues: Cytochrome P450 regulator dap1 (166 aa).

Residues 4 to 21 (TQVVFIVTLFLYLLITRW) form a helical membrane-spanning segment. The 104-residue stretch at 42-145 (DYTPAELKEY…QKYQAVGRLI (104 aa)) folds into the Cytochrome b5 heme-binding domain. At Ser108 the chain carries Phosphoserine. Tyr138 contributes to the heme binding site.

It belongs to the cytochrome b5 family. MAPR subfamily. In terms of assembly, interacts with erg5 and erg11.

It is found in the endoplasmic reticulum. Its subcellular location is the membrane. In terms of biological role, required for sterol biosynthesis. Functions as a positive regulator of cytochrome P450 enzymes erg5 and erg11. Function requires bound heme. The chain is Cytochrome P450 regulator dap1 (dap1) from Schizosaccharomyces pombe (strain 972 / ATCC 24843) (Fission yeast).